We begin with the raw amino-acid sequence, 337 residues long: Glycerol-3-phosphate dehydrogenase [NAD(P)+] (337 aa).

Residues Ser12, Trp13, and Lys110 each contribute to the NADPH site. Positions 110, 141, and 143 each coordinate sn-glycerol 3-phosphate. Ala145 is a binding site for NADPH. 5 residues coordinate sn-glycerol 3-phosphate: Lys196, Asp249, Ser259, Arg260, and Asn261. Catalysis depends on Lys196, which acts as the Proton acceptor. Arg260 provides a ligand contact to NADPH. Val284 and Glu286 together coordinate NADPH.

Belongs to the NAD-dependent glycerol-3-phosphate dehydrogenase family.

The protein resides in the cytoplasm. It carries out the reaction sn-glycerol 3-phosphate + NAD(+) = dihydroxyacetone phosphate + NADH + H(+). The catalysed reaction is sn-glycerol 3-phosphate + NADP(+) = dihydroxyacetone phosphate + NADPH + H(+). It participates in membrane lipid metabolism; glycerophospholipid metabolism. Functionally, catalyzes the reduction of the glycolytic intermediate dihydroxyacetone phosphate (DHAP) to sn-glycerol 3-phosphate (G3P), the key precursor for phospholipid synthesis. The polypeptide is Glycerol-3-phosphate dehydrogenase [NAD(P)+] (Levilactobacillus brevis (strain ATCC 367 / BCRC 12310 / CIP 105137 / JCM 1170 / LMG 11437 / NCIMB 947 / NCTC 947) (Lactobacillus brevis)).